The following is a 597-amino-acid chain: Elongation factor 4 (597 aa).

The 183-residue stretch at 2 to 184 (DHIRNFSIIA…ALVAKVPPPK (183 aa)) folds into the tr-type G domain. GTP-binding positions include 14–19 (DHGKST) and 131–134 (NKID).

This sequence belongs to the TRAFAC class translation factor GTPase superfamily. Classic translation factor GTPase family. LepA subfamily.

The protein resides in the cell inner membrane. It carries out the reaction GTP + H2O = GDP + phosphate + H(+). Its function is as follows. Required for accurate and efficient protein synthesis under certain stress conditions. May act as a fidelity factor of the translation reaction, by catalyzing a one-codon backward translocation of tRNAs on improperly translocated ribosomes. Back-translocation proceeds from a post-translocation (POST) complex to a pre-translocation (PRE) complex, thus giving elongation factor G a second chance to translocate the tRNAs correctly. Binds to ribosomes in a GTP-dependent manner. This Paraburkholderia phytofirmans (strain DSM 17436 / LMG 22146 / PsJN) (Burkholderia phytofirmans) protein is Elongation factor 4.